We begin with the raw amino-acid sequence, 186 residues long: Peptidyl-tRNA hydrolase (186 aa).

Tyrosine 16 is a tRNA binding site. Residue histidine 21 is the Proton acceptor of the active site. TRNA-binding residues include tyrosine 66, asparagine 68, and asparagine 114.

The protein belongs to the PTH family. In terms of assembly, monomer.

It localises to the cytoplasm. The enzyme catalyses an N-acyl-L-alpha-aminoacyl-tRNA + H2O = an N-acyl-L-amino acid + a tRNA + H(+). Functionally, hydrolyzes ribosome-free peptidyl-tRNAs (with 1 or more amino acids incorporated), which drop off the ribosome during protein synthesis, or as a result of ribosome stalling. Catalyzes the release of premature peptidyl moieties from peptidyl-tRNA molecules trapped in stalled 50S ribosomal subunits, and thus maintains levels of free tRNAs and 50S ribosomes. In Ureaplasma urealyticum serovar 10 (strain ATCC 33699 / Western), this protein is Peptidyl-tRNA hydrolase.